Here is a 230-residue protein sequence, read N- to C-terminus: UPF0502 protein Oter_3715 (230 aa).

It belongs to the UPF0502 family.

The polypeptide is UPF0502 protein Oter_3715 (Opitutus terrae (strain DSM 11246 / JCM 15787 / PB90-1)).